The following is a 129-amino-acid chain: Small ribosomal subunit protein uS11 (129 aa).

It belongs to the universal ribosomal protein uS11 family. Part of the 30S ribosomal subunit. Interacts with proteins S7 and S18. Binds to IF-3.

In terms of biological role, located on the platform of the 30S subunit, it bridges several disparate RNA helices of the 16S rRNA. Forms part of the Shine-Dalgarno cleft in the 70S ribosome. This chain is Small ribosomal subunit protein uS11, found in Staphylococcus epidermidis (strain ATCC 12228 / FDA PCI 1200).